Consider the following 2181-residue polypeptide: Genome polyprotein (2181 aa).

Glycine 80 carries N-myristoyl glycine; by host lipidation. Interaction with host receptor ANTXR1 stretches follow at residues 316-337 (DYRTGKNMPFQSLGTYYRPPNW) and 761-772 (RFGLYANPSGSG). An SF3 helicase domain is found at 1165 to 1333 (LGKTNLAQSL…YKKHTRLNFD (169 aa)). 1197 to 1204 (GKPGCGKS) is an ATP binding site. Residues 1472–1500 (EETESEGSVKAPRSENAYDGPKKNSKPPG) are disordered. Tyrosine 1489 bears the O-(5'-phospho-RNA)-tyrosine mark. The region spanning 1511 to 1704 (NVDMGFEAAV…AGTYISKLGL (194 aa)) is the Peptidase C3 domain. The active-site For protease 3C activity and deubiquitinase activity is histidine 1556. The For protease 3C activity role is filled by aspartate 1592. The active-site For protease 3C activity and deubiquitinase activity is the cysteine 1668. The RdRp catalytic domain maps to 1950 to 2068 (KNTYDVDYSA…GTDYDLDFNE (119 aa)). Residues aspartate 1956 and aspartate 2054 each act as for RdRp activity in the active site.

Interacts with host entry receptor ANTRX1. In terms of assembly, interacts with host IRF3; this interaction is involved in the suppression of IRF3 and IRF7 expression and phosphorylation by the virus. Interacts with host IRF7; this interaction is involved in the suppression of IRF3 and IRF7 expression and phosphorylation by the virus. Interacts with host MAVS; this interaction allows the cleavage of MAVS and subsequent suppression of host immunity. Interacts with host TRIF; this interaction allows the cleavage of TRIF and subsequent suppression of host immunity. Interacts with host TANK; this interaction allows the cleavage of TANK and subsequent suppression of host immunity. Interacts with host RIGI. Interacts with host TBK1. Interacts with host TRAF3. Specific enzymatic cleavages by the viral protease in vivo yield a variety of precursors and mature proteins. The polyprotein seems to be cotranslationally cleaved at the 2A/2B junction by a ribosomal skip from one codon to the next without formation of a peptide bond. This process would release the P1-2A peptide from the translational complex. In terms of processing, during virion maturation, immature virions are rendered infectious following cleavage of VP0 into VP4 and VP2. This maturation seems to be an autocatalytic event triggered by the presence of RNA in the capsid and is followed by a conformational change of the particle. Post-translationally, myristoylation is required during RNA encapsidation and formation of the mature virus particle. Uridylylated by the polymerase and is covalently linked to the 5'-end of genomic RNA. This uridylylated form acts as a nucleotide-peptide primer for the polymerase.

The protein resides in the virion. It is found in the host cytoplasm. Its subcellular location is the host nucleus. The protein localises to the host nucleolus. It localises to the host cytoplasmic vesicle membrane. It carries out the reaction RNA(n) + a ribonucleoside 5'-triphosphate = RNA(n+1) + diphosphate. It catalyses the reaction Selective cleavage of Gln-|-Gly bond in the poliovirus polyprotein. In other picornavirus reactions Glu may be substituted for Gln, and Ser or Thr for Gly.. The catalysed reaction is Thiol-dependent hydrolysis of ester, thioester, amide, peptide and isopeptide bonds formed by the C-terminal Gly of ubiquitin (a 76-residue protein attached to proteins as an intracellular targeting signal).. The enzyme catalyses ATP + H2O = ADP + phosphate + H(+). Its function is as follows. Forms an icosahedral capsid of pseudo T=3 symmetry with capsid proteins VP2 and VP3. Together they form an icosahedral capsid composed of 60 copies of each VP1, VP2, and VP3, with a diameter of approximately 325 Angstroms. VP4 lies on the inner surface of the protein shell formed by VP1, VP2 and VP3. All the three latter proteins contain a beta-sheet structure called beta-barrel jelly roll. VP1 is situated at the 12 fivefold axes, whereas VP2 and VP3 are located at the quasi-sixfold axes. Binds the host receptor ANTXR1 for attachment and uncoating (entry). Forms an icosahedral capsid of pseudo T=3 symmetry with capsid proteins VP2 and VP3. Together they form an icosahedral capsid composed of 60 copies of each VP1, VP2, and VP3, with a diameter of approximately 270 Angstroms. VP4 lies on the inner surface of the protein shell formed by VP1, VP2 and VP3. All the three latter proteins contain a beta-sheet structure called beta-barrel jelly roll. VP1 is situated at the 12 fivefold axes, whereas VP2 and VP3 are located at the quasi-sixfold axes. Binds the host receptor ANTXR1 for attachment and uncoating (entry). In terms of biological role, forms an icosahedral capsid of pseudo T=3 symmetry with capsid proteins VP2 and VP3. Together they form an icosahedral capsid composed of 60 copies of each VP1, VP2, and VP3, with a diameter of approximately 270 Angstroms. VP4 lies on the inner surface of the protein shell formed by VP1, VP2 and VP3. All the three latter proteins contain a beta-sheet structure called beta-barrel jelly roll. VP1 is situated at the 12 fivefold axes, whereas VP2 and VP3 are located at the quasi-sixfold axes. Vp3 also seems to be involved in the binding to host receptor ANTXR1 for attachment and uncoating (entry). Functionally, lies on the inner surface of the capsid shell. After binding to the host receptor, the capsid undergoes conformational changes. Capsid protein VP4 is released, capsid protein VP1 N-terminus is externalized, and together, they shape a pore in the host membrane through which the viral genome is translocated into the host cell cytoplasm. After genome has been released, the channel shrinks. Its function is as follows. VP0 precursor is a component of immature procapsids. Mediates self-processing of the polyprotein by a translational effect termed 'ribosome skipping'. Mechanistically, 2A-mediated cleavage occurs between the C-terminal glycine and the proline of the downstream protein 2B. In terms of biological role, plays an essential role in the virus replication cycle by acting as a viroporin. Creates a pore in the host endoplasmic reticulum and as a consequence releases Ca2+ in the cytoplasm of infected cell. In turn, high levels of cytoplasmic calcium may trigger membrane trafficking and transport of viral ER-associated proteins to viroplasms, sites of viral genome replication. Functionally, associates with and induces structural rearrangements of intracellular membranes. Its function is as follows. Covalently linked to the 5'-end of both the positive-strand and negative-strand genomic RNAs. Acts as a genome-linked replication primer. Cysteine protease that generates mature viral proteins from the precursor polyprotein. Inactivates crucial host adapter molecules in order to suppress antiviral type-I interferon (type-I IFN) and NF-kappaB production to escape host antiviral innate immune responses. Deubiquitinase that acts on both lysine-48- and lysine-63-linked polyubiquitin chains and inhibits the ubiquitination of the ATP-dependent RNA helicase RIGI, TANK-binding kinase 1 (TBK1), and TNF receptor-associated factor 3 (TRAF3), thereby blocking the expression of IFN-beta and IFN stimulated gene 54 (ISG54). Induces host IRF3 and IRF7 degradation thereby suppressing IRF3- and IRF7-induced type-I IFN production. Also decreases host IRF3 phosphorylation leading to negligible IRF3 activation. Cleaves host MAVS, TRIF and TANK, which are then unable to regulate pattern recognition receptor (PRR)-mediated type-I IFN production. Inhibits the integrated stress response (ISR) in the infected cell by disrupting eIF4GI-G3BP1 interaction. Stress granule formation is thus inhibited. In terms of biological role, replicates the genomic and antigenomic RNAs by recognizing replications specific signals. Performs VPg uridylylation. This is Genome polyprotein from Sus scrofa (Pig).